Consider the following 106-residue polypeptide: Large ribosomal subunit protein uL23 (106 aa).

The protein belongs to the universal ribosomal protein uL23 family. In terms of assembly, part of the 50S ribosomal subunit. Contacts protein L29, and trigger factor when it is bound to the ribosome.

In terms of biological role, one of the early assembly proteins it binds 23S rRNA. One of the proteins that surrounds the polypeptide exit tunnel on the outside of the ribosome. Forms the main docking site for trigger factor binding to the ribosome. The polypeptide is Large ribosomal subunit protein uL23 (Neisseria meningitidis serogroup A / serotype 4A (strain DSM 15465 / Z2491)).